The sequence spans 362 residues: Aminomethyltransferase (362 aa).

This sequence belongs to the GcvT family. The glycine cleavage system is composed of four proteins: P, T, L and H.

It catalyses the reaction N(6)-[(R)-S(8)-aminomethyldihydrolipoyl]-L-lysyl-[protein] + (6S)-5,6,7,8-tetrahydrofolate = N(6)-[(R)-dihydrolipoyl]-L-lysyl-[protein] + (6R)-5,10-methylene-5,6,7,8-tetrahydrofolate + NH4(+). The glycine cleavage system catalyzes the degradation of glycine. This chain is Aminomethyltransferase, found in Chloroherpeton thalassium (strain ATCC 35110 / GB-78).